A 105-amino-acid polypeptide reads, in one-letter code: Large ribosomal subunit protein bL21c (105 aa).

This sequence belongs to the bacterial ribosomal protein bL21 family. As to quaternary structure, part of the 50S ribosomal subunit.

The protein resides in the plastid. Its subcellular location is the chloroplast. This protein binds to 23S rRNA. This is Large ribosomal subunit protein bL21c from Thalassiosira pseudonana (Marine diatom).